Reading from the N-terminus, the 71-residue chain is Exodeoxyribonuclease 7 small subunit (71 aa).

The protein belongs to the XseB family. Heterooligomer composed of large and small subunits.

Its subcellular location is the cytoplasm. It catalyses the reaction Exonucleolytic cleavage in either 5'- to 3'- or 3'- to 5'-direction to yield nucleoside 5'-phosphates.. In terms of biological role, bidirectionally degrades single-stranded DNA into large acid-insoluble oligonucleotides, which are then degraded further into small acid-soluble oligonucleotides. This Streptococcus suis (strain 98HAH33) protein is Exodeoxyribonuclease 7 small subunit.